Reading from the N-terminus, the 491-residue chain is Probable succinate-semialdehyde dehydrogenase [NADP(+)] (491 aa).

Residues 163 to 164 (WN), 187 to 190 (KPAE), and 241 to 242 (GS) each bind NADP(+). The active-site Proton acceptor is the Glu-263. Leu-264 serves as a coordination point for NADP(+). Cys-297 acts as the Nucleophile in catalysis. Glu-394 lines the NADP(+) pocket.

Belongs to the aldehyde dehydrogenase family.

The enzyme catalyses succinate semialdehyde + NADP(+) + H2O = succinate + NADPH + 2 H(+). The protein operates within amino-acid degradation; 4-aminobutanoate degradation. Functionally, catalyzes the NADP(+) dependent oxidation of succinate semialdehyde to succinate. In Sinorhizobium fredii (strain NBRC 101917 / NGR234), this protein is Probable succinate-semialdehyde dehydrogenase [NADP(+)] (gabD).